The following is a 319-amino-acid chain: Glycine--tRNA ligase alpha subunit (319 aa).

It belongs to the class-II aminoacyl-tRNA synthetase family. As to quaternary structure, tetramer of two alpha and two beta subunits.

Its subcellular location is the cytoplasm. The catalysed reaction is tRNA(Gly) + glycine + ATP = glycyl-tRNA(Gly) + AMP + diphosphate. This Oenococcus oeni (strain ATCC BAA-331 / PSU-1) protein is Glycine--tRNA ligase alpha subunit.